The primary structure comprises 292 residues: tRNA (guanine-N(7)-)-methyltransferase (292 aa).

The disordered stretch occupies residues 1-54; that stretch reads MLKRDQSEMDIEAETANMGKEEKESFVHKRQKYRQEQEEKRLAAKKGVSFEQPE. The segment covering 19 to 42 has biased composition (basic and acidic residues); it reads GKEEKESFVHKRQKYRQEQEEKRL. Residues Gly110, 133-134, 168-169, and Cys188 each bind S-adenosyl-L-methionine; these read EI and NA. Asp191 is a catalytic residue. 266 to 268 provides a ligand contact to S-adenosyl-L-methionine; it reads TEE.

It belongs to the class I-like SAM-binding methyltransferase superfamily. TrmB family. As to quaternary structure, forms a complex with TRM82.

Its subcellular location is the nucleus. It carries out the reaction guanosine(46) in tRNA + S-adenosyl-L-methionine = N(7)-methylguanosine(46) in tRNA + S-adenosyl-L-homocysteine. It participates in tRNA modification; N(7)-methylguanine-tRNA biosynthesis. Functionally, catalyzes the formation of N(7)-methylguanine at position 46 (m7G46) in tRNA. The polypeptide is tRNA (guanine-N(7)-)-methyltransferase (Yarrowia lipolytica (strain CLIB 122 / E 150) (Yeast)).